A 397-amino-acid polypeptide reads, in one-letter code: Mannonate dehydratase (397 aa).

Belongs to the mannonate dehydratase family. Requires Fe(2+) as cofactor. It depends on Mn(2+) as a cofactor.

The catalysed reaction is D-mannonate = 2-dehydro-3-deoxy-D-gluconate + H2O. It participates in carbohydrate metabolism; pentose and glucuronate interconversion. In terms of biological role, catalyzes the dehydration of D-mannonate. This Saccharophagus degradans (strain 2-40 / ATCC 43961 / DSM 17024) protein is Mannonate dehydratase.